Consider the following 332-residue polypeptide: Torsin-1A (332 aa).

Residues 1–20 (MKLGRAALGLLLLAPSVVQA) form the signal peptide. Residues 91-251 (KPKKPLTLSL…VSVFNNKNSG (161 aa)) form an interaction with SNAPIN region. An ATP-binding site is contributed by 102–109 (GWTGTGKN). Residues Asn-143 and Asn-158 are each glycosylated (N-linked (GlcNAc...) asparagine). Residues 251-332 (GFWHSSLIDR…FTKLDYYYDD (82 aa)) are interaction with KLC1. Positions 312 to 332 (RVFSDKGCKTVFTKLDYYYDD) are interaction with SYNE3.

Belongs to the ClpA/ClpB family. Torsin subfamily. As to quaternary structure, homohexamer. Interacts with TOR1B; the interaction may be specific of neural tissues. Interacts (ATP-bound) with TOR1AIP1 and TOR1AIP2; the interactions induce ATPase activity. Interacts with KLHL14; preferentially when ATP-free. Interacts with KLC1 (via TPR repeats); the interaction associates TOR1A with the kinesin oligomeric complex. Interacts with COPS4; the interaction associates TOR1A with the CSN complex. Interacts with SNAPIN; the interaction is direct and associates SNAPIN with the CSN complex. Interacts with STON2. Interacts (ATP-bound) with SYNE3 (via KASH domain); the interaction is required for SYNE3 nuclear envelope localization. Interacts with VIM; the interaction associates TOR1A with the cytoskeleton. Interacts with PLEC. Interacts (ATP-bound) with SLC6A3; regulates SLC6A3 transport to the plasma membrane. Post-translationally, N-glycosylated.

The protein localises to the endoplasmic reticulum lumen. It is found in the nucleus membrane. The protein resides in the cell projection. It localises to the growth cone. Its subcellular location is the cytoplasmic vesicle membrane. The protein localises to the cytoplasmic vesicle. It is found in the secretory vesicle. The protein resides in the synaptic vesicle. It localises to the cytoplasm. Its subcellular location is the cytoskeleton. It carries out the reaction ATP + H2O = ADP + phosphate + H(+). In terms of biological role, protein with chaperone functions important for the control of protein folding, processing, stability and localization as well as for the reduction of misfolded protein aggregates. Involved in the regulation of synaptic vesicle recycling, controls STON2 protein stability in collaboration with the COP9 signalosome complex (CSN). In the nucleus, may link the cytoskeleton with the nuclear envelope, this mechanism seems to be crucial for the control of nuclear polarity, cell movement and, specifically in neurons, nuclear envelope integrity. Participates in the cellular trafficking and may regulate the subcellular location of multipass membrane proteins such as the dopamine transporter SLC6A3, leading to the modulation of dopamine neurotransmission. In the endoplasmic reticulum, plays a role in the quality control of protein folding by increasing clearance of misfolded proteins such as SGCE variants or holding them in an intermediate state for proper refolding. May have a redundant function with TOR1B in non-neural tissues. The sequence is that of Torsin-1A (TOR1A) from Macaca fascicularis (Crab-eating macaque).